We begin with the raw amino-acid sequence, 715 residues long: Probable serine/threonine-protein kinase MARK-B (715 aa).

A compositionally biased stretch (low complexity) spans 24–37; sequence SCSSNSTTSSSSNS. The interval 24–65 is disordered; that stretch reads SCSSNSTTSSSSNSPKQNKVSPGYRNKPQQQQHKKGHKMGNY. One can recognise a Protein kinase domain in the interval 65-320; it reads YLLGKTIGSG…LDEIKTHVWV (256 aa). ATP is bound by residues 71-79 and K94; that span reads IGSGTSSKV. The active-site Proton acceptor is the D187. Basic and acidic residues predominate over residues 335–344; it reads KVSDRLEKEQ. Disordered regions lie at residues 335–399 and 446–530; these read KVSD…IPQN and CSAP…HHST. Low complexity predominate over residues 345–368; that stretch reads QQQTPQHQQTQQQLQPQSQLQQHS. Residues 381 to 399 are compositionally biased toward polar residues; sequence IGSNRPLNQSSPNLTIPQN. Low complexity-rich tracts occupy residues 451–478 and 487–513; these read SPHS…LSVS and SSNP…INTS. The span at 517–527 shows a compositional bias: basic residues; sequence QYHHHHHHQNH. A KA1 domain is found at 666–715; it reads LCPRNETINFEIEVCKVNGMDMYGIKFKRLSGDAWSYSSSCIKIVESLKL.

Belongs to the protein kinase superfamily. CAMK Ser/Thr protein kinase family. SNF1 subfamily.

The catalysed reaction is L-seryl-[protein] + ATP = O-phospho-L-seryl-[protein] + ADP + H(+). The enzyme catalyses L-threonyl-[protein] + ATP = O-phospho-L-threonyl-[protein] + ADP + H(+). The sequence is that of Probable serine/threonine-protein kinase MARK-B (mrkB) from Dictyostelium discoideum (Social amoeba).